Here is a 506-residue protein sequence, read N- to C-terminus: UPF0522 protein A (506 aa).

The signal sequence occupies residues 1 to 18; sequence MIKSLLLLISIIIGIVIS. Asn-145, Asn-155, Asn-330, Asn-366, Asn-418, and Asn-427 each carry an N-linked (GlcNAc...) asparagine glycan.

This sequence belongs to the UPF0522 family.

It is found in the secreted. The sequence is that of UPF0522 protein A from Dictyostelium discoideum (Social amoeba).